A 240-amino-acid polypeptide reads, in one-letter code: Zinc import ATP-binding protein ZnuC (240 aa).

The ABC transporter domain occupies 1-219 (MSLLSIAALD…PAYRAMFGLD (219 aa)). Residue 36 to 43 (GPNGSGKT) participates in ATP binding.

Belongs to the ABC transporter superfamily. Zinc importer (TC 3.A.1.15.5) family. In terms of assembly, the complex is composed of two ATP-binding proteins (ZnuC), two transmembrane proteins (ZnuB) and a solute-binding protein (ZnuA).

The protein resides in the cell inner membrane. The enzyme catalyses Zn(2+)(out) + ATP(in) + H2O(in) = Zn(2+)(in) + ADP(in) + phosphate(in) + H(+)(in). In terms of biological role, part of the ABC transporter complex ZnuABC involved in zinc import. Responsible for energy coupling to the transport system. The protein is Zinc import ATP-binding protein ZnuC of Chromohalobacter salexigens (strain ATCC BAA-138 / DSM 3043 / CIP 106854 / NCIMB 13768 / 1H11).